Consider the following 295-residue polypeptide: Ent-pimara-9(11),15-diene synthase (295 aa).

Belongs to the terpene synthase family. In terms of assembly, monomer. A divalent metal cation is required as a cofactor.

The catalysed reaction is ent-copalyl diphosphate = ent-pimara-9(11),15-diene + diphosphate. Its pathway is antibiotic biosynthesis. In terms of biological role, involved in viguiepinol biosynthesis. Catalyzes the conversion of copalyl diphosphate (ent-CDP) into pimara-9(11),15-diene (PMD). The chain is Ent-pimara-9(11),15-diene synthase from Streptomyces sp. (strain KO-3988).